We begin with the raw amino-acid sequence, 165 residues long: Adenine phosphoribosyltransferase (165 aa).

This sequence belongs to the purine/pyrimidine phosphoribosyltransferase family. In terms of assembly, homodimer.

The protein resides in the cytoplasm. The catalysed reaction is AMP + diphosphate = 5-phospho-alpha-D-ribose 1-diphosphate + adenine. Its pathway is purine metabolism; AMP biosynthesis via salvage pathway; AMP from adenine: step 1/1. Catalyzes a salvage reaction resulting in the formation of AMP, that is energically less costly than de novo synthesis. The sequence is that of Adenine phosphoribosyltransferase from Bdellovibrio bacteriovorus (strain ATCC 15356 / DSM 50701 / NCIMB 9529 / HD100).